A 180-amino-acid chain; its full sequence is Cytokinin-beta-glucosidase 1 (180 aa).

In terms of biological role, hydrolyzes cytokinin glucosides thus liberating free cytokinins. The sequence is that of Cytokinin-beta-glucosidase 1 (ROLC1) from Panax ginseng (Korean ginseng).